The sequence spans 688 residues: DNA ligase (688 aa).

NAD(+)-binding positions include 42-46, 91-92, and Glu128; these read DAEYD and SL. The active-site N6-AMP-lysine intermediate is Lys130. NAD(+) contacts are provided by Arg151, Glu188, Lys305, and Lys329. 4 residues coordinate Zn(2+): Cys423, Cys426, Cys441, and Cys447. Residues 608–688 form the BRCT domain; the sequence is APQGVLAGKT…GMRKLLEGQL (81 aa).

The protein belongs to the NAD-dependent DNA ligase family. LigA subfamily. Mg(2+) is required as a cofactor. It depends on Mn(2+) as a cofactor.

The catalysed reaction is NAD(+) + (deoxyribonucleotide)n-3'-hydroxyl + 5'-phospho-(deoxyribonucleotide)m = (deoxyribonucleotide)n+m + AMP + beta-nicotinamide D-nucleotide.. In terms of biological role, DNA ligase that catalyzes the formation of phosphodiester linkages between 5'-phosphoryl and 3'-hydroxyl groups in double-stranded DNA using NAD as a coenzyme and as the energy source for the reaction. It is essential for DNA replication and repair of damaged DNA. The sequence is that of DNA ligase from Paraburkholderia xenovorans (strain LB400).